The primary structure comprises 460 residues: Ammonium transporter 1 member 3 (460 aa).

Transmembrane regions (helical) follow at residues 15-37 (AIYLLFSAYLVFVMQLGFAMLCA), 50-72 (LTNVVDAVVGSLSYYLFGFAFAF), 98-117 (FFLYQWAFAIAVAGITSGSI), 124-146 (TAYLVFSFFLTGFVYPVVAHWLW), 166-188 (IDFAGSGVVHLVGGIAGFWGSIV), 209-227 (NATLVVLGTLLLWFGWFGF), 255-277 (AVTTTLAGSTAGIVTLFGRRLLV), 305-327 (PWAAILCGFCAAWVLIGLNILAL), 337-356 (AAQLHGGCGAWGLIFTGLFA), and 377-399 (GLILGGGWGLFGAQIVELLSIVV).

This sequence belongs to the ammonia transporter channel (TC 1.A.11.2) family. Leaves.

The protein resides in the membrane. Its function is as follows. Ammonium transporter that may be involved in ammonium transport throughout the plant. In Solanum lycopersicum (Tomato), this protein is Ammonium transporter 1 member 3 (AMT1-3).